We begin with the raw amino-acid sequence, 137 residues long: Putative pre-16S rRNA nuclease (137 aa).

The protein belongs to the YqgF nuclease family.

The protein resides in the cytoplasm. Its function is as follows. Could be a nuclease involved in processing of the 5'-end of pre-16S rRNA. This Clostridium botulinum (strain Alaska E43 / Type E3) protein is Putative pre-16S rRNA nuclease.